The following is a 115-amino-acid chain: NADH-ubiquinone oxidoreductase chain 3 (115 aa).

3 helical membrane passes run Leu3–Trp23, Phe55–Leu75, and Leu84–Tyr104.

This sequence belongs to the complex I subunit 3 family. Core subunit of respiratory chain NADH dehydrogenase (Complex I) which is composed of 45 different subunits. Interacts with TMEM186. Interacts with TMEM242.

The protein localises to the mitochondrion inner membrane. The catalysed reaction is a ubiquinone + NADH + 5 H(+)(in) = a ubiquinol + NAD(+) + 4 H(+)(out). Core subunit of the mitochondrial membrane respiratory chain NADH dehydrogenase (Complex I) which catalyzes electron transfer from NADH through the respiratory chain, using ubiquinone as an electron acceptor. Essential for the catalytic activity of complex I. The protein is NADH-ubiquinone oxidoreductase chain 3 of Equus asinus (Donkey).